We begin with the raw amino-acid sequence, 477 residues long: Protein nucleotidyltransferase YdiU (477 aa).

The ATP site is built by Gly-89, Gly-91, Arg-92, Lys-112, Asp-124, Gly-125, Arg-178, and Arg-185. Catalysis depends on Asp-257, which acts as the Proton acceptor. Residues Asn-258 and Asp-267 each contribute to the Mg(2+) site. Asp-267 contacts ATP.

This sequence belongs to the SELO family. It depends on Mg(2+) as a cofactor. Mn(2+) is required as a cofactor.

The enzyme catalyses L-seryl-[protein] + ATP = 3-O-(5'-adenylyl)-L-seryl-[protein] + diphosphate. It catalyses the reaction L-threonyl-[protein] + ATP = 3-O-(5'-adenylyl)-L-threonyl-[protein] + diphosphate. It carries out the reaction L-tyrosyl-[protein] + ATP = O-(5'-adenylyl)-L-tyrosyl-[protein] + diphosphate. The catalysed reaction is L-histidyl-[protein] + UTP = N(tele)-(5'-uridylyl)-L-histidyl-[protein] + diphosphate. The enzyme catalyses L-seryl-[protein] + UTP = O-(5'-uridylyl)-L-seryl-[protein] + diphosphate. It catalyses the reaction L-tyrosyl-[protein] + UTP = O-(5'-uridylyl)-L-tyrosyl-[protein] + diphosphate. Its function is as follows. Nucleotidyltransferase involved in the post-translational modification of proteins. It can catalyze the addition of adenosine monophosphate (AMP) or uridine monophosphate (UMP) to a protein, resulting in modifications known as AMPylation and UMPylation. The polypeptide is Protein nucleotidyltransferase YdiU (Synechocystis sp. (strain ATCC 27184 / PCC 6803 / Kazusa)).